The following is a 408-amino-acid chain: Broad specificity amino-acid racemase (408 aa).

The first 24 residues, 1 to 24 (MNFKKTLLSIAIASASLTPAFSYS), serve as a signal peptide directing secretion. An intrachain disulfide couples cysteine 71 to cysteine 97. Lysine 75 serves as the catalytic Proton acceptor. Lysine 75 is modified (N6-(pyridoxal phosphate)lysine). Arginine 174 provides a ligand contact to substrate. Tyrosine 300 serves as the catalytic Proton acceptor. Residue methionine 348 coordinates substrate.

The protein belongs to the alanine racemase family. Bsr subfamily. It depends on pyridoxal 5'-phosphate as a cofactor.

It localises to the periplasm. It carries out the reaction an L-alpha-amino acid = a D-alpha-amino acid. It catalyses the reaction L-lysine = D-lysine. The catalysed reaction is L-arginine = D-arginine. Functionally, amino-acid racemase able to utilize a broad range of substrates. The protein is Broad specificity amino-acid racemase (alr) of Vibrio vulnificus (strain CMCP6).